The primary structure comprises 168 residues: Ribosome maturation factor RimM (168 aa).

Residues 92 to 166 enclose the PRC barrel domain; it reads EDTFYKADLI…RITVDPIEGM (75 aa).

This sequence belongs to the RimM family. Binds ribosomal protein uS19.

It is found in the cytoplasm. Functionally, an accessory protein needed during the final step in the assembly of 30S ribosomal subunit, possibly for assembly of the head region. Essential for efficient processing of 16S rRNA. May be needed both before and after RbfA during the maturation of 16S rRNA. It has affinity for free ribosomal 30S subunits but not for 70S ribosomes. The protein is Ribosome maturation factor RimM of Alkaliphilus metalliredigens (strain QYMF).